The chain runs to 449 residues: Xaa-Pro dipeptidase (449 aa).

Positions 246, 257, 345, 390, and 429 each coordinate Mn(2+).

Belongs to the peptidase M24B family. Bacterial-type prolidase subfamily. Requires Mn(2+) as cofactor.

The enzyme catalyses Xaa-L-Pro dipeptide + H2O = an L-alpha-amino acid + L-proline. Functionally, splits dipeptides with a prolyl residue in the C-terminal position. In Yersinia enterocolitica serotype O:8 / biotype 1B (strain NCTC 13174 / 8081), this protein is Xaa-Pro dipeptidase.